The primary structure comprises 301 residues: Protein FdhE homolog (301 aa).

Belongs to the FdhE family.

The protein localises to the cytoplasm. In terms of biological role, necessary for formate dehydrogenase activity. The sequence is that of Protein FdhE homolog from Shewanella baltica (strain OS195).